The chain runs to 868 residues: Hopanoid transporter HpnN (868 aa).

12 helical membrane passes run 16 to 36, 273 to 293, 298 to 318, 326 to 346, 370 to 390, 403 to 423, 452 to 472, 710 to 730, 740 to 760, 762 to 782, 805 to 825, and 834 to 854; these read FAAF…FYTY, GAVV…WMAL, IIFA…AVGL, LLSI…GIQF, YSAV…LSFL, IAGA…PALL, IAII…LYFM, IVAS…ILLW, ALTL…CVLI, LPLN…GVAF, AIFF…LSSH, and LLAL…PALM. An SSD domain is found at 299 to 425; that stretch reads IFAVAANLVI…ITVLPALLKL (127 aa).

It belongs to the resistance-nodulation-cell division (RND) (TC 2.A.6) family. MmpL subfamily.

The protein localises to the cell inner membrane. Essential for hopanoid transport from the cytoplasmic to the outer membrane. Required for the C(35) hopanoid, bacteriohopanetetrol, to remain localized to the mother cell type. This is Hopanoid transporter HpnN from Rhodopseudomonas palustris (strain TIE-1).